The chain runs to 353 residues: Photosystem II protein D1 (353 aa).

Threonine 2 is modified (N-acetylthreonine). Threonine 2 carries the post-translational modification Phosphothreonine. The next 3 membrane-spanning stretches (helical) occupy residues 29-46, 118-133, and 142-156; these read YIGW…TATS, HFLL…EWEL, and WIAV…AATA. Chlorophyll a is bound at residue histidine 118. Tyrosine 126 lines the pheophytin a pocket. Aspartate 170 and glutamate 189 together coordinate [CaMn4O5] cluster. A helical transmembrane segment spans residues 197–218; the sequence is FHMLGVAGVFGGSLFSAMHGSL. Chlorophyll a is bound at residue histidine 198. A quinone contacts are provided by residues histidine 215 and 264-265; that span reads SF. Position 215 (histidine 215) interacts with Fe cation. Histidine 272 is a Fe cation binding site. A helical transmembrane segment spans residues 274–288; sequence FLAAWPVVGIWFTAL. [CaMn4O5] cluster is bound by residues histidine 332, glutamate 333, aspartate 342, and alanine 344. Positions 345–353 are excised as a propeptide; that stretch reads ALEVPSLNG.

It belongs to the reaction center PufL/M/PsbA/D family. In terms of assembly, PSII is composed of 1 copy each of membrane proteins PsbA, PsbB, PsbC, PsbD, PsbE, PsbF, PsbH, PsbI, PsbJ, PsbK, PsbL, PsbM, PsbT, PsbX, PsbY, PsbZ, Psb30/Ycf12, at least 3 peripheral proteins of the oxygen-evolving complex and a large number of cofactors. It forms dimeric complexes. The D1/D2 heterodimer binds P680, chlorophylls that are the primary electron donor of PSII, and subsequent electron acceptors. It shares a non-heme iron and each subunit binds pheophytin, quinone, additional chlorophylls, carotenoids and lipids. D1 provides most of the ligands for the Mn4-Ca-O5 cluster of the oxygen-evolving complex (OEC). There is also a Cl(-1) ion associated with D1 and D2, which is required for oxygen evolution. The PSII complex binds additional chlorophylls, carotenoids and specific lipids. serves as cofactor. Tyr-161 forms a radical intermediate that is referred to as redox-active TyrZ, YZ or Y-Z. In terms of processing, C-terminally processed by CTPA; processing is essential to allow assembly of the oxygen-evolving complex and thus photosynthetic growth.

Its subcellular location is the plastid. It localises to the chloroplast thylakoid membrane. It catalyses the reaction 2 a plastoquinone + 4 hnu + 2 H2O = 2 a plastoquinol + O2. Functionally, photosystem II (PSII) is a light-driven water:plastoquinone oxidoreductase that uses light energy to abstract electrons from H(2)O, generating O(2) and a proton gradient subsequently used for ATP formation. It consists of a core antenna complex that captures photons, and an electron transfer chain that converts photonic excitation into a charge separation. The D1/D2 (PsbA/PsbD) reaction center heterodimer binds P680, the primary electron donor of PSII as well as several subsequent electron acceptors. The sequence is that of Photosystem II protein D1 from Oryza nivara (Indian wild rice).